We begin with the raw amino-acid sequence, 680 residues long: DNA-directed RNA polymerase subunit beta' (680 aa).

4 residues coordinate Zn(2+): C69, C71, C87, and C90. Residues D489, D491, and D493 each coordinate Mg(2+).

It belongs to the RNA polymerase beta' chain family. RpoC1 subfamily. As to quaternary structure, in plastids the minimal PEP RNA polymerase catalytic core is composed of four subunits: alpha, beta, beta', and beta''. When a (nuclear-encoded) sigma factor is associated with the core the holoenzyme is formed, which can initiate transcription. Mg(2+) is required as a cofactor. The cofactor is Zn(2+).

Its subcellular location is the plastid. The protein resides in the chloroplast. It carries out the reaction RNA(n) + a ribonucleoside 5'-triphosphate = RNA(n+1) + diphosphate. In terms of biological role, DNA-dependent RNA polymerase catalyzes the transcription of DNA into RNA using the four ribonucleoside triphosphates as substrates. The protein is DNA-directed RNA polymerase subunit beta' of Aethionema cordifolium (Lebanon stonecress).